A 489-amino-acid chain; its full sequence is Bridging integrator 2 (489 aa).

A BAR domain is found at 28 to 244 (VLQKLGKTVE…MSKLEKQHSN (217 aa)). Positions 267–302 (QSCAASSPVSPVSPVSPVTSPTSPSATSEPESVSAT) are enriched in low complexity. The tract at residues 267 to 489 (QSCAASSPVS…ASGGLVGLFL (223 aa)) is disordered. The residue at position 273 (S273) is a Phosphoserine. Residues 311 to 331 (GGEDSCESQESLKDEEADEAQ) show a composition bias toward acidic residues. A Phosphoserine modification is found at S357. Over residues 358 to 368 (QEEALSSSAQS) the composition is skewed to low complexity. A phosphoserine mark is found at S380, S392, S420, S422, S424, S430, S435, S439, and S443.

As to quaternary structure, homodimer. Interacts with BIN1. Interacts with ARHGEF6 (via SH3 domain), ARHGEF7 (via SH3 domain), SH3GL1, SH3GL2 and SH3GL3. Identified in a complex with ARHGEF6 and GIT2.

It localises to the cytoplasm. The protein localises to the cell projection. Its subcellular location is the podosome membrane. The protein resides in the cell cortex. It is found in the phagocytic cup. Functionally, promotes cell motility and migration, probably via its interaction with the cell membrane and with podosome proteins that mediate interaction with the cytoskeleton. Modulates membrane curvature and mediates membrane tubulation. Inhibits phagocytosis. Plays a role in podosome formation. The sequence is that of Bridging integrator 2 (Bin2) from Mus musculus (Mouse).